The primary structure comprises 481 residues: Glycogen synthase (481 aa).

Lys15 serves as a coordination point for ADP-alpha-D-glucose.

The protein belongs to the glycosyltransferase 1 family. Bacterial/plant glycogen synthase subfamily.

It carries out the reaction [(1-&gt;4)-alpha-D-glucosyl](n) + ADP-alpha-D-glucose = [(1-&gt;4)-alpha-D-glucosyl](n+1) + ADP + H(+). Its pathway is glycan biosynthesis; glycogen biosynthesis. Functionally, synthesizes alpha-1,4-glucan chains using ADP-glucose. In Mesorhizobium japonicum (strain LMG 29417 / CECT 9101 / MAFF 303099) (Mesorhizobium loti (strain MAFF 303099)), this protein is Glycogen synthase.